The sequence spans 629 residues: Probable potassium transport system protein Kup 3 (629 aa).

A run of 12 helical transmembrane segments spans residues 20–40 (LSLS…LYTF), 61–81 (VSLI…SFAL), 106–126 (PFII…GTIT), 143–163 (PSLK…LFAI), 171–191 (IGKA…ILGA), 212–232 (FLFS…LCVT), 253–273 (WFGL…ALVL), 291–311 (FLLP…QAII), 343–363 (IYIG…TIGF), 372–392 (AYGI…FIAL), 400–420 (IITS…FFAA), and 425–445 (FING…MMYI).

The protein belongs to the HAK/KUP transporter (TC 2.A.72) family.

Its subcellular location is the cell inner membrane. It carries out the reaction K(+)(in) + H(+)(in) = K(+)(out) + H(+)(out). Its function is as follows. Transport of potassium into the cell. Likely operates as a K(+):H(+) symporter. This chain is Probable potassium transport system protein Kup 3, found in Legionella pneumophila (strain Lens).